The chain runs to 362 residues: MKETVIRKLEGLMERYEEVQALLGEPNVVSDQDKFRALTREYSQLGEVVAGFQQYQQAEADLQAIEEMLSGDDAEMKAMAQEELAEAKQLIERVEAELQVLLLPKDPKDDSNCFLEIRAGAGGDEAAIFAGDLFRMYSKYSERRGWRMEIMSTSDGEHGGYKEIIVRMEGDSVYGIMKFESGGHRVQRVPETESQGRVHTSACTVMVLPEIPEKEIPEINPADLRIDTFRASGAGGQHINKTDSAIRITHIPTGTVVECQDERSQHKNKARAMSVLAARLAQQEEDKRRAEADSTRRSILSTGDRSDRIRTYNYPQGRVSDHRINLTLYRLSEVMEGDLDSLLKPLQQEYQADQLAALSENN.

N5-methylglutamine is present on Gln237. Positions 282–296 (QQEEDKRRAEADSTR) are enriched in basic and acidic residues. Residues 282–304 (QQEEDKRRAEADSTRRSILSTGD) form a disordered region.

Belongs to the prokaryotic/mitochondrial release factor family. In terms of processing, methylated by PrmC. Methylation increases the termination efficiency of RF1.

It localises to the cytoplasm. In terms of biological role, peptide chain release factor 1 directs the termination of translation in response to the peptide chain termination codons UAG and UAA. The protein is Peptide chain release factor 1 of Tolumonas auensis (strain DSM 9187 / NBRC 110442 / TA 4).